Reading from the N-terminus, the 451-residue chain is Tryptophan biosynthesis protein TrpCF (451 aa).

The tract at residues 1 to 256 (MQETILNKII…TNIKSLIIGD (256 aa)) is indole-3-glycerol phosphate synthase. An N-(5'-phosphoribosyl)anthranilate isomerase region spans residues 257 to 451 (NKVCGLTRII…ISLIFKKLTF (195 aa)).

It in the N-terminal section; belongs to the TrpC family. This sequence in the C-terminal section; belongs to the TrpF family. Monomer.

It catalyses the reaction N-(5-phospho-beta-D-ribosyl)anthranilate = 1-(2-carboxyphenylamino)-1-deoxy-D-ribulose 5-phosphate. The enzyme catalyses 1-(2-carboxyphenylamino)-1-deoxy-D-ribulose 5-phosphate + H(+) = (1S,2R)-1-C-(indol-3-yl)glycerol 3-phosphate + CO2 + H2O. The protein operates within amino-acid biosynthesis; L-tryptophan biosynthesis; L-tryptophan from chorismate: step 3/5. Its pathway is amino-acid biosynthesis; L-tryptophan biosynthesis; L-tryptophan from chorismate: step 4/5. Its function is as follows. Bifunctional enzyme that catalyzes two sequential steps of tryptophan biosynthetic pathway. The first reaction is catalyzed by the isomerase, coded by the TrpF domain; the second reaction is catalyzed by the synthase, coded by the TrpC domain. The sequence is that of Tryptophan biosynthesis protein TrpCF (trpC) from Buchnera aphidicola subsp. Schizaphis graminum (strain Sg).